The sequence spans 883 residues: Valine--tRNA ligase (883 aa).

Residues 46-56 (PNVTGKLHLGH) carry the 'HIGH' region motif. The 'KMSKS' region signature appears at 520–524 (KMSKS). Lys523 serves as a coordination point for ATP. Residues 809–883 (LADLLNVEEE…RIDEMKKLVK (75 aa)) adopt a coiled-coil conformation.

The protein belongs to the class-I aminoacyl-tRNA synthetase family. ValS type 1 subfamily. As to quaternary structure, monomer.

It is found in the cytoplasm. The enzyme catalyses tRNA(Val) + L-valine + ATP = L-valyl-tRNA(Val) + AMP + diphosphate. Its function is as follows. Catalyzes the attachment of valine to tRNA(Val). As ValRS can inadvertently accommodate and process structurally similar amino acids such as threonine, to avoid such errors, it has a 'posttransfer' editing activity that hydrolyzes mischarged Thr-tRNA(Val) in a tRNA-dependent manner. The polypeptide is Valine--tRNA ligase (Streptococcus pneumoniae serotype 4 (strain ATCC BAA-334 / TIGR4)).